The sequence spans 490 residues: MEGQDEVSAREQHFHSQVRESTICFLLFAILYVVSYFIITRYKRKSDEQEDEDAIVNRISLFLSTFTLAVSAGAVLLLPFSIISNEILLSFPQNYYIQWLNGSLIHGLWNLASLFSNLCLFVLMPFAFFFLESEGFAGLKKGIRARILETLVMLLLLALLILGIVWVASALIDNDAASMESLYDLWEFYLPYLYSCISLMGCLLLLLCTPVGLSRMFTVMGQLLVKPTILEDLDEQIYIITLEEEALQRRLNGLSSSVEYNIMELEQELENVKTLKTKLERRKKASAWERNLVYPAVMVLLLIETSISVLLVACNILCLLVDETAMPKGTRGPGIGNASLSTFGFVGAALEIILIFYLMVSSVVGFYSLRFFGNFTPKKDDTTMTKIIGNCVSILVLSSALPVMSRTLGITRFDLLGDFGRFNWLGNFYIVLSYNLLFAIVTTLCLVRKFTSAVREELFKALGLHKLHLPNTSRDSETAKPSVNGHQKAL.

At 1 to 19 (MEGQDEVSAREQHFHSQVR) the chain is on the extracellular side. A helical membrane pass occupies residues 20–40 (ESTICFLLFAILYVVSYFIIT). Over 41 to 62 (RYKRKSDEQEDEDAIVNRISLF) the chain is Cytoplasmic. The helical transmembrane segment at 63 to 83 (LSTFTLAVSAGAVLLLPFSII) threads the bilayer. Over 84-110 (SNEILLSFPQNYYIQWLNGSLIHGLWN) the chain is Extracellular. The helical transmembrane segment at 111–131 (LASLFSNLCLFVLMPFAFFFL) threads the bilayer. Topologically, residues 132-151 (ESEGFAGLKKGIRARILETL) are cytoplasmic. A helical transmembrane segment spans residues 152-172 (VMLLLLALLILGIVWVASALI). Topologically, residues 173-187 (DNDAASMESLYDLWE) are extracellular. A helical membrane pass occupies residues 188–208 (FYLPYLYSCISLMGCLLLLLC). The Cytoplasmic portion of the chain corresponds to 209–291 (TPVGLSRMFT…RKKASAWERN (83 aa)). Residues 250-287 (RLNGLSSSVEYNIMELEQELENVKTLKTKLERRKKASA) adopt a coiled-coil conformation. Residues 292–312 (LVYPAVMVLLLIETSISVLLV) form a helical membrane-spanning segment. Residues 313–339 (ACNILCLLVDETAMPKGTRGPGIGNAS) lie on the Extracellular side of the membrane. The helical transmembrane segment at 340–360 (LSTFGFVGAALEIILIFYLMV) threads the bilayer. The Cytoplasmic portion of the chain corresponds to 361–383 (SSVVGFYSLRFFGNFTPKKDDTT). The helical transmembrane segment at 384–404 (MTKIIGNCVSILVLSSALPVM) threads the bilayer. Over 405-426 (SRTLGITRFDLLGDFGRFNWLG) the chain is Extracellular. The chain crosses the membrane as a helical span at residues 427–447 (NFYIVLSYNLLFAIVTTLCLV). Residues 448 to 490 (RKFTSAVREELFKALGLHKLHLPNTSRDSETAKPSVNGHQKAL) lie on the Cytoplasmic side of the membrane.

Belongs to the LIMR family. In terms of tissue distribution, widely expressed with strongest expression in heart and pancreas.

The protein resides in the membrane. Its function is as follows. Putative membrane receptor. This Homo sapiens (Human) protein is Limb region 1 protein homolog (LMBR1).